We begin with the raw amino-acid sequence, 252 residues long: dITP/XTP pyrophosphatase (252 aa).

Residue 7-12 (THNEGK) participates in substrate binding. The active-site Proton acceptor is the Asp74. Position 74 (Asp74) interacts with Mg(2+). Substrate-binding positions include Ser75 and 193 to 196 (FGYD). A disordered region spans residues 202–229 (DDQPAGRVSTEPDHEGEPLTSAEMTPAE). Residues Lys230 and 235-236 (HR) each bind substrate.

It belongs to the HAM1 NTPase family. Homodimer. The cofactor is Mg(2+).

It catalyses the reaction XTP + H2O = XMP + diphosphate + H(+). The enzyme catalyses dITP + H2O = dIMP + diphosphate + H(+). The catalysed reaction is ITP + H2O = IMP + diphosphate + H(+). In terms of biological role, pyrophosphatase that catalyzes the hydrolysis of nucleoside triphosphates to their monophosphate derivatives, with a high preference for the non-canonical purine nucleotides XTP (xanthosine triphosphate), dITP (deoxyinosine triphosphate) and ITP. Seems to function as a house-cleaning enzyme that removes non-canonical purine nucleotides from the nucleotide pool, thus preventing their incorporation into DNA/RNA and avoiding chromosomal lesions. This Bifidobacterium longum (strain NCC 2705) protein is dITP/XTP pyrophosphatase.